Consider the following 527-residue polypeptide: Protein IQ-DOMAIN 4 (527 aa).

The interval 13-90 is disordered; sequence CLSPGKDKKN…PPSPPPPPPA (78 aa). Over residues 17–26 the composition is skewed to basic and acidic residues; that stretch reads GKDKKNQKPE. Residues 63-90 are compositionally biased toward pro residues; that stretch reads PYPPPPPLPDFAPQPLLPPPSPPPPPPA. In terms of domain architecture, IQ spans 147 to 175; the sequence is EETAAIKIQNAYRCYTARRTLRALRGMAR. The interval 256–273 is calmodulin-binding; the sequence is RSVNRKEASVRRERALAY. The interval 323–527 is disordered; it reads VSVKSSLKRE…EKKRRNGGSS (205 aa). A compositionally biased stretch (polar residues) spans 335–360; it reads IKSSPARSKTQKSASQSSIQWPVNND. Positions 361–370 are enriched in basic and acidic residues; it reads TKSRKIEVTN. Polar residues-rich tracts occupy residues 399-422 and 437-455; these read LDNT…NAQT and NTKT…NLAN. The segment covering 471–481 has biased composition (basic and acidic residues); that stretch reads PKKEVVADKKK. The Nuclear localization signal motif lies at 478-485; that stretch reads DKKKPPQM.

Belongs to the IQD family. In terms of assembly, binds to multiple calmodulin (CaM) in the presence of Ca(2+) and CaM-like proteins.

Its subcellular location is the nucleus. It is found in the nucleolus. Functionally, may be involved in cooperative interactions with calmodulins or calmodulin-like proteins. Recruits calmodulin proteins to microtubules, thus being a potential scaffold in cellular signaling and trafficking. May associate with nucleic acids and regulate gene expression at the transcriptional or post-transcriptional level. In Arabidopsis thaliana (Mouse-ear cress), this protein is Protein IQ-DOMAIN 4.